Here is a 248-residue protein sequence, read N- to C-terminus: MKSSTQTILEHTAIPRHIAVIMDGNGRWAKKRFLPRIMGHKRGLDALENMVKHCAKLGVQYLTVFAFSTENWRRPEDEVSFLMGLFLQALQKQVRRLHENNMRLKILGSRERFNRQILQGIEEAEALTANNTGLTLSIAADYGGRWDILQAANKLIAEGVSEITEDTLAKHLMLGDAPEPDLFIRTGGETRISNFLLWQMAYAELYFTDILWPDFDETALDAAVASFQKRERRFGRTSEQLPIGQQRN.

The active site involves aspartate 23. Aspartate 23 is a Mg(2+) binding site. Substrate contacts are provided by residues 24–27 (GNGR), tryptophan 28, arginine 36, histidine 40, and 68–70 (STE). Catalysis depends on asparagine 71, which acts as the Proton acceptor. Substrate contacts are provided by residues tryptophan 72, arginine 74, arginine 185, and 191–193 (RIS). Glutamate 204 contributes to the Mg(2+) binding site.

This sequence belongs to the UPP synthase family. Homodimer. It depends on Mg(2+) as a cofactor.

Functionally, catalyzes the condensation of isopentenyl diphosphate (IPP) with allylic pyrophosphates generating different type of terpenoids. The polypeptide is Isoprenyl transferase (Neisseria gonorrhoeae (strain ATCC 700825 / FA 1090)).